A 335-amino-acid chain; its full sequence is Glucan endo-1,3-beta-glucosidase, acidic isoform (335 aa).

Positions 1–29 (MARQGVIASMHALALLLGAFAAIPTGVQS) are cleaved as a signal peptide. The Proton donor role is filled by Glu122. Catalysis depends on Glu259, which acts as the Nucleophile.

The protein belongs to the glycosyl hydrolase 17 family. Accumulates in aleurone layers. Much lower levels are found in the embryo, and none in starchy endosperm.

It is found in the secreted. It localises to the extracellular space. The enzyme catalyses Hydrolysis of (1-&gt;3)-beta-D-glucosidic linkages in (1-&gt;3)-beta-D-glucans.. Is thought to be an important plant defense-related product against fungal pathogens. The polypeptide is Glucan endo-1,3-beta-glucosidase, acidic isoform (Zea mays (Maize)).